An 86-amino-acid polypeptide reads, in one-letter code: Acyl carrier protein (86 aa).

Positions 2–82 (ATVFERVKKV…AVVDYLKSKG (81 aa)) constitute a Carrier domain. Serine 37 is modified (O-(pantetheine 4'-phosphoryl)serine).

It belongs to the acyl carrier protein (ACP) family. 4'-phosphopantetheine is transferred from CoA to a specific serine of apo-ACP by AcpS. This modification is essential for activity because fatty acids are bound in thioester linkage to the sulfhydryl of the prosthetic group.

It localises to the cytoplasm. It functions in the pathway lipid metabolism; fatty acid biosynthesis. Its function is as follows. Carrier of the growing fatty acid chain in fatty acid biosynthesis. This chain is Acyl carrier protein, found in Dehalococcoides mccartyi (strain ATCC BAA-2100 / JCM 16839 / KCTC 5957 / BAV1).